The following is a 174-amino-acid chain: FAD synthase (174 aa).

ATP is bound by residues Thr-34–Phe-35, His-39–His-42, Asp-119, and Tyr-147.

The protein belongs to the archaeal FAD synthase family. Homodimer. A divalent metal cation serves as cofactor.

The enzyme catalyses FMN + ATP + H(+) = FAD + diphosphate. It functions in the pathway cofactor biosynthesis; FAD biosynthesis; FAD from FMN: step 1/1. Catalyzes the transfer of the AMP portion of ATP to flavin mononucleotide (FMN) to produce flavin adenine dinucleotide (FAD) coenzyme. The chain is FAD synthase from Methanococcus voltae (strain ATCC BAA-1334 / A3).